The primary structure comprises 337 residues: Lipoyl synthase (337 aa).

The [4Fe-4S] cluster site is built by C81, C86, C92, C107, C111, C114, and S323. The 220-residue stretch at 93–312 (FSHGTATFMI…EDYGNALGFS (220 aa)) folds into the Radical SAM core domain.

This sequence belongs to the radical SAM superfamily. Lipoyl synthase family. Requires [4Fe-4S] cluster as cofactor.

The protein resides in the cytoplasm. It carries out the reaction [[Fe-S] cluster scaffold protein carrying a second [4Fe-4S](2+) cluster] + N(6)-octanoyl-L-lysyl-[protein] + 2 oxidized [2Fe-2S]-[ferredoxin] + 2 S-adenosyl-L-methionine + 4 H(+) = [[Fe-S] cluster scaffold protein] + N(6)-[(R)-dihydrolipoyl]-L-lysyl-[protein] + 4 Fe(3+) + 2 hydrogen sulfide + 2 5'-deoxyadenosine + 2 L-methionine + 2 reduced [2Fe-2S]-[ferredoxin]. It participates in protein modification; protein lipoylation via endogenous pathway; protein N(6)-(lipoyl)lysine from octanoyl-[acyl-carrier-protein]: step 2/2. Its function is as follows. Catalyzes the radical-mediated insertion of two sulfur atoms into the C-6 and C-8 positions of the octanoyl moiety bound to the lipoyl domains of lipoate-dependent enzymes, thereby converting the octanoylated domains into lipoylated derivatives. The protein is Lipoyl synthase of Xanthomonas campestris pv. campestris (strain B100).